A 510-amino-acid polypeptide reads, in one-letter code: Glycerol kinase (510 aa).

Thr14 contacts ADP. Positions 14 and 15 each coordinate ATP. A sn-glycerol 3-phosphate-binding site is contributed by Thr14. Arg18 contacts ADP. Sn-glycerol 3-phosphate is bound by residues Arg84, Glu85, Tyr136, and Asp256. The glycerol site is built by Arg84, Glu85, Tyr136, Asp256, and Gln257. ADP contacts are provided by Thr278, Gly322, Gly422, and Asn426. Thr278, Gly322, and Gly422 together coordinate ATP.

Belongs to the FGGY kinase family.

It catalyses the reaction glycerol + ATP = sn-glycerol 3-phosphate + ADP + H(+). It participates in polyol metabolism; glycerol degradation via glycerol kinase pathway; sn-glycerol 3-phosphate from glycerol: step 1/1. Its function is as follows. Key enzyme in the regulation of glycerol uptake and metabolism. Catalyzes the phosphorylation of glycerol to yield sn-glycerol 3-phosphate. It also catalyzes the phosphorylation of dihydroxyacetone (DHA). Involved, together with the DHA kinase DhaKLM, in the metabolism of DHA. The chain is Glycerol kinase from Haloferax volcanii (strain ATCC 29605 / DSM 3757 / JCM 8879 / NBRC 14742 / NCIMB 2012 / VKM B-1768 / DS2) (Halobacterium volcanii).